The following is a 519-amino-acid chain: Ion-translocating oxidoreductase complex subunit C (519 aa).

4Fe-4S ferredoxin-type domains lie at 372–401 (ETPE…FELN) and 411–440 (GAAK…VQSF). [4Fe-4S] cluster-binding residues include Cys-381, Cys-384, Cys-387, Cys-391, Cys-420, Cys-423, Cys-426, and Cys-430. The tract at residues 494-519 (KAEEAAAAAAMPPPATATAIQGEATP) is disordered.

Belongs to the 4Fe4S bacterial-type ferredoxin family. RnfC subfamily. The complex is composed of six subunits: RnfA, RnfB, RnfC, RnfD, RnfE and RnfG. Requires [4Fe-4S] cluster as cofactor.

The protein resides in the cellular chromatophore membrane. Functionally, part of a membrane-bound complex that couples electron transfer with translocation of ions across the membrane. Required for nitrogen fixation. Involved in electron transfer to nitrogenase. In Rhodobacter capsulatus (Rhodopseudomonas capsulata), this protein is Ion-translocating oxidoreductase complex subunit C.